Consider the following 78-residue polypeptide: RNA-binding protein KhpA (78 aa).

One can recognise a KH domain in the interval 29–78; the sequence is TIIYELSVAKPDIGKIIGKEGRTIKAIRTLLVSVASRNNVRVSLEIMEEK.

The protein belongs to the KhpA RNA-binding protein family.

It is found in the cytoplasm. Its function is as follows. A probable RNA-binding protein. The polypeptide is RNA-binding protein KhpA (Chlamydia pneumoniae (Chlamydophila pneumoniae)).